Here is a 168-residue protein sequence, read N- to C-terminus: Phosphopantetheine adenylyltransferase (168 aa).

Residue Thr14 coordinates substrate. Residues 14 to 15 and His22 each bind ATP; that span reads TF. Positions 46, 78, and 92 each coordinate substrate. Residues 93–95, Glu103, and 128–134 each bind ATP; these read GLR and YSFISSS.

The protein belongs to the bacterial CoaD family. Homohexamer. Mg(2+) serves as cofactor.

The protein resides in the cytoplasm. It catalyses the reaction (R)-4'-phosphopantetheine + ATP + H(+) = 3'-dephospho-CoA + diphosphate. The protein operates within cofactor biosynthesis; coenzyme A biosynthesis; CoA from (R)-pantothenate: step 4/5. In terms of biological role, reversibly transfers an adenylyl group from ATP to 4'-phosphopantetheine, yielding dephospho-CoA (dPCoA) and pyrophosphate. This Xanthomonas campestris pv. campestris (strain B100) protein is Phosphopantetheine adenylyltransferase.